Reading from the N-terminus, the 610-residue chain is Putative sensor histidine kinase NtrY-like (610 aa).

4 helical membrane-spanning segments follow: residues isoleucine 18–isoleucine 38, lysine 49–threonine 69, isoleucine 92–alanine 112, and isoleucine 292–valine 312. The region spanning alanine 314–arginine 368 is the HAMP domain. In terms of domain architecture, Histidine kinase spans lysine 385–glutamate 596. Position 388 is a phosphohistidine; by autocatalysis (histidine 388).

The protein localises to the cell membrane. The catalysed reaction is ATP + protein L-histidine = ADP + protein N-phospho-L-histidine.. Its function is as follows. Member of the two-component regulatory system RBE_0470/RBE_0312. The protein is Putative sensor histidine kinase NtrY-like of Rickettsia bellii (strain RML369-C).